The sequence spans 246 residues: Ribosomal RNA small subunit methyltransferase J (246 aa).

Residues E115–R116 and D169 each bind S-adenosyl-L-methionine.

The protein belongs to the methyltransferase superfamily. RsmJ family.

Its subcellular location is the cytoplasm. It catalyses the reaction guanosine(1516) in 16S rRNA + S-adenosyl-L-methionine = N(2)-methylguanosine(1516) in 16S rRNA + S-adenosyl-L-homocysteine + H(+). Specifically methylates the guanosine in position 1516 of 16S rRNA. This chain is Ribosomal RNA small subunit methyltransferase J, found in Buchnera aphidicola subsp. Acyrthosiphon pisum (strain 5A).